We begin with the raw amino-acid sequence, 442 residues long: C4-dicarboxylate transport protein (442 aa).

The next 8 helical transmembrane spans lie at 10–30 (VQVL…PSLG), 40–60 (FIKL…VSGI), 77–97 (LLYF…IVNI), 144–164 (FTQG…FALL), 183–203 (VIFV…FGAM), 221–241 (LMIT…GLIA), 331–351 (LLGV…SGFI), and 354–374 (AATL…ILGI). The segment at 418–442 (LPTIEPDVHSEERGEGRELDSLRPA) is disordered. The span at 423–442 (PDVHSEERGEGRELDSLRPA) shows a compositional bias: basic and acidic residues.

This sequence belongs to the dicarboxylate/amino acid:cation symporter (DAACS) (TC 2.A.23) family.

Its subcellular location is the cell membrane. Its function is as follows. Responsible for the transport of dicarboxylates such as succinate, fumarate, and malate across the membrane. This Deinococcus deserti (strain DSM 17065 / CIP 109153 / LMG 22923 / VCD115) protein is C4-dicarboxylate transport protein.